Here is a 340-residue protein sequence, read N- to C-terminus: Uroporphyrinogen decarboxylase (340 aa).

Substrate contacts are provided by residues 21–25 (RQAGR), Asp71, Tyr148, Ser203, and His316.

This sequence belongs to the uroporphyrinogen decarboxylase family. Homodimer.

It localises to the cytoplasm. It catalyses the reaction uroporphyrinogen III + 4 H(+) = coproporphyrinogen III + 4 CO2. It participates in porphyrin-containing compound metabolism; protoporphyrin-IX biosynthesis; coproporphyrinogen-III from 5-aminolevulinate: step 4/4. In terms of biological role, catalyzes the decarboxylation of four acetate groups of uroporphyrinogen-III to yield coproporphyrinogen-III. The protein is Uroporphyrinogen decarboxylase of Campylobacter concisus (strain 13826).